A 270-amino-acid polypeptide reads, in one-letter code: Glutamate racemase (270 aa).

Substrate-binding positions include 14-15 (DS) and 46-47 (YG). Cys-77 (proton donor/acceptor) is an active-site residue. A substrate-binding site is contributed by 78-79 (NT). The active-site Proton donor/acceptor is the Cys-189. 190–191 (TH) serves as a coordination point for substrate.

Belongs to the aspartate/glutamate racemases family.

It carries out the reaction L-glutamate = D-glutamate. Its pathway is cell wall biogenesis; peptidoglycan biosynthesis. Provides the (R)-glutamate required for cell wall biosynthesis. The polypeptide is Glutamate racemase (Neisseria meningitidis serogroup A / serotype 4A (strain DSM 15465 / Z2491)).